A 232-amino-acid polypeptide reads, in one-letter code: MVKFKAIRGVAFDLDGTLVDSAPGLARAIDMALAHQGLPAAGEALVSTWIGNGADVLVERALHWAGREHNAQLVAQTRELFDHYYAKTVEQGSQLFPQVKATLAQLAANGLPIGLITNKPTPFVAPLLTSLGISDYFSVIIGGDDVVVKKPHPAPLYLLLGKLGLHAREMLFVGDSRNDIMAAQAAGCPCIGLTYGYNYGEAIATSHPDCVLAHFADLLPAIGLPSLKDQEV.

Residue D13 is the Nucleophile of the active site. Residues D13, D15, and D175 each coordinate Mg(2+).

This sequence belongs to the HAD-like hydrolase superfamily. CbbY/CbbZ/Gph/YieH family. In terms of assembly, monomer. Requires Mg(2+) as cofactor. The cofactor is chloride.

The catalysed reaction is 2-phosphoglycolate + H2O = glycolate + phosphate. The protein operates within organic acid metabolism; glycolate biosynthesis; glycolate from 2-phosphoglycolate: step 1/1. In terms of biological role, specifically catalyzes the dephosphorylation of 2-phosphoglycolate. Is involved in the dissimilation of the intracellular 2-phosphoglycolate formed during the DNA repair of 3'-phosphoglycolate ends, a major class of DNA lesions induced by oxidative stress. The protein is Phosphoglycolate phosphatase of Yersinia pestis.